The primary structure comprises 266 residues: Dihydropteroate synthase (266 aa).

The Pterin-binding domain maps to 12–260; that stretch reads AAIMGILNVT…DVKANQDIVA (249 aa). Asn19 is a binding site for Mg(2+). (7,8-dihydropterin-6-yl)methyl diphosphate-binding positions include Thr59, Asp93, Asn112, Asp176, Lys212, and 248-250; that span reads RVH.

Belongs to the DHPS family. As to quaternary structure, homodimer or homotrimer. Requires Mg(2+) as cofactor.

It catalyses the reaction (7,8-dihydropterin-6-yl)methyl diphosphate + 4-aminobenzoate = 7,8-dihydropteroate + diphosphate. It functions in the pathway cofactor biosynthesis; tetrahydrofolate biosynthesis; 7,8-dihydrofolate from 2-amino-4-hydroxy-6-hydroxymethyl-7,8-dihydropteridine diphosphate and 4-aminobenzoate: step 1/2. Functionally, catalyzes the condensation of para-aminobenzoate (pABA) with 6-hydroxymethyl-7,8-dihydropterin diphosphate (DHPt-PP) to form 7,8-dihydropteroate (H2Pte), the immediate precursor of folate derivatives. In Streptococcus pyogenes serotype M6 (strain ATCC BAA-946 / MGAS10394), this protein is Dihydropteroate synthase (folP).